The primary structure comprises 367 residues: Probable thylakoidal processing peptidase 2, chloroplastic (367 aa).

The N-terminal 68 residues, 1–68 (MAIRVTFTYS…NTWGPSSGPR (68 aa)), are a transit peptide targeting the chloroplast. The interval 53 to 72 (DKSPGSNTWGPSSGPRARPA) is disordered. Over residues 62 to 72 (GPSSGPRARPA) the composition is skewed to low complexity. The chain crosses the membrane as a helical span at residues 185-205 (EDAKAAFTAVTVSLLFRSALA). The Lumenal, thylakoid segment spans residues 206-367 (EPKSIPSTSM…VSQKRAVDVS (162 aa)). S214 is an active-site residue.

This sequence belongs to the peptidase S26 family.

The protein localises to the plastid. Its subcellular location is the chloroplast thylakoid membrane. The catalysed reaction is Cleavage of hydrophobic, N-terminal signal or leader sequences from secreted and periplasmic proteins.. Its function is as follows. Cleaves the thylakoid-transfer domain from a chloroplast protein. The protein is Probable thylakoidal processing peptidase 2, chloroplastic (TPP2) of Arabidopsis thaliana (Mouse-ear cress).